We begin with the raw amino-acid sequence, 469 residues long: MFQNADEAKKLIADEDVKFIDVRFCDLPGVMQHFTIPASAFDPAEELAFDGSSIRGFQAIHESDMAVRADLSTARVDPFRRDKTVNINFFIHDPITGEQYSRDPRNVAKKAEAYLASTGIGDTGYFGPEAEFYVFDSVRLANSATESFYHIDSEAGAWNTGALENNRGYKVRYKGGYFPVPPVDHFADLRAQISLELDRAGLQVERHDHEVGTAGQAEINYKFNTLLAAADDLQLFKYIVKNVAWQNGKTATFMPKPIFGDNGSGMHVHQSLWTGGQALFYDEAGYAGLSDTARYYMGGILKHAPSLLAFTNPTVNSYHRLVPGFEAPVNLVYSQRNRSAAMRIPITGSNPKAKRVEFRAPDSSGNPYLAFSALLLAGLDGIKNKIEPAEPIDKDLYELAPEEHAGVPQVPTSLPAVLDRLEADHEFLLAGDVFTPDLIETWIDYKRTNEIAPLQLRPHPYEYEQYYDV.

The GS beta-grasp domain maps to 15–96 (EDVKFIDVRF…INFFIHDPIT (82 aa)). The GS catalytic domain occupies 104 to 469 (PRNVAKKAEA…PYEYEQYYDV (366 aa)). Mg(2+)-binding residues include Glu-129 and Glu-131. Glu-205 is an ATP binding site. 2 residues coordinate Mg(2+): Glu-210 and Glu-218. 221–223 (YKF) contacts ATP. L-glutamate is bound by residues 262–263 (NG) and Gly-263. Mg(2+) is bound at residue His-267. Residues 269–271 (HQS) and Ser-271 each bind ATP. Residues Arg-320, Glu-326, and Arg-338 each coordinate L-glutamate. ATP is bound by residues Arg-338, Arg-343, and Lys-352. Glu-357 provides a ligand contact to Mg(2+). L-glutamate is bound at residue Arg-359. Tyr-397 is modified (O-AMP-tyrosine).

It belongs to the glutamine synthetase family. Oligomer of 12 subunits arranged in the form of two hexagons. Requires Mg(2+) as cofactor.

The protein localises to the cytoplasm. It catalyses the reaction L-glutamate + NH4(+) + ATP = L-glutamine + ADP + phosphate + H(+). With respect to regulation, the activity of this enzyme could be controlled by adenylation under conditions of abundant glutamine. Functionally, catalyzes the ATP-dependent biosynthesis of glutamine from glutamate and ammonia. The protein is Glutamine synthetase of Streptomyces viridochromogenes.